Reading from the N-terminus, the 548-residue chain is Chaperonin GroEL (548 aa).

Residues 30 to 33 (TLGP), Lys51, 87 to 91 (DGTTT), Gly415, 478 to 480 (NAA), and Asp494 each bind ATP.

The protein belongs to the chaperonin (HSP60) family. In terms of assembly, forms a cylinder of 14 subunits composed of two heptameric rings stacked back-to-back. Interacts with the co-chaperonin GroES.

The protein localises to the cytoplasm. The catalysed reaction is ATP + H2O + a folded polypeptide = ADP + phosphate + an unfolded polypeptide.. Functionally, together with its co-chaperonin GroES, plays an essential role in assisting protein folding. The GroEL-GroES system forms a nano-cage that allows encapsulation of the non-native substrate proteins and provides a physical environment optimized to promote and accelerate protein folding. This is Chaperonin GroEL from Janthinobacterium sp. (strain Marseille) (Minibacterium massiliensis).